The sequence spans 72 residues: Translation initiation factor IF-1 (72 aa).

An S1-like domain is found at methionine 1–lysine 72.

This sequence belongs to the IF-1 family. As to quaternary structure, component of the 30S ribosomal translation pre-initiation complex which assembles on the 30S ribosome in the order IF-2 and IF-3, IF-1 and N-formylmethionyl-tRNA(fMet); mRNA recruitment can occur at any time during PIC assembly.

The protein localises to the cytoplasm. Functionally, one of the essential components for the initiation of protein synthesis. Stabilizes the binding of IF-2 and IF-3 on the 30S subunit to which N-formylmethionyl-tRNA(fMet) subsequently binds. Helps modulate mRNA selection, yielding the 30S pre-initiation complex (PIC). Upon addition of the 50S ribosomal subunit IF-1, IF-2 and IF-3 are released leaving the mature 70S translation initiation complex. This chain is Translation initiation factor IF-1, found in Chelativorans sp. (strain BNC1).